Reading from the N-terminus, the 170-residue chain is Cytochrome c-type biogenesis protein CcmE (170 aa).

Residues 1–7 (MTRKKRR) lie on the Cytoplasmic side of the membrane. Residues 8–28 (LILIAACGSVLALAVGLILYA) form a helical; Signal-anchor for type II membrane protein membrane-spanning segment. The Periplasmic segment spans residues 29 to 170 (MSGSIVFFRS…DSTLGPRSER (142 aa)). Residues H122 and Y126 each coordinate heme. The interval 132–170 (ADALKAQGRWQEGGPNRGGPAPKPATAAADSTLGPRSER) is disordered.

It belongs to the CcmE/CycJ family.

The protein localises to the cell inner membrane. Heme chaperone required for the biogenesis of c-type cytochromes. Transiently binds heme delivered by CcmC and transfers the heme to apo-cytochromes in a process facilitated by CcmF and CcmH. The protein is Cytochrome c-type biogenesis protein CcmE of Methylobacterium radiotolerans (strain ATCC 27329 / DSM 1819 / JCM 2831 / NBRC 15690 / NCIMB 10815 / 0-1).